We begin with the raw amino-acid sequence, 893 residues long: MSATSTRNKHSKIHGNEKVDITKDEFARMRLALQDEEFRKLFFDYVDEIQDPENRKIYEQEITQLEKERGVDVTFIHPKPGFVVKTAIDGELKCFINICGSQIVERPNNEVAINSETGERGLTWSIPMAQAPARDDIDANKKLCKVFDVVFHPDALHLGTRNSQFRKCLIDTALDGVEREFNVNLDRANLKYPKLDYKGEPHATVIRKLSKNATAEEREPHPLEHTYPKKPEANAGKPKVLPMKKNVTSTPTFAVPKYSIKHSHDIDMAQYTDELDAKLQVTIPRALIVEIELPLLSSTADCQLDVTEKSVYLLSERSGAKYRLKLDLPYTVDDKSGNARFDTEHRRLCITLPVVRSSAREQRQMHDNVRILSREDSGVELNSNSESPAEDEEAGSEAIVELTTMQQTQTDNFDAFPPRQSFLKRDLHYQMVANFDCNIVENVMAFLLHVPNVQPDSMRTVIREGRSVHLQFASMGSGYYPTNYAFLVQLPDAADPQLHIDHVEPDASDDNVVLRLFMSESCMTLPSYLAGPDATDLTEYACFPPCKTNIEDENCDLELDKPLRISTYHNELNKSIEVTIIPQDISEQVHQEQQQEEEEEEEQHEQQQHQHKKGNKKQRKRNKKQRSLSESAFEDLKAEQQQQHQKQQQQQEKLPENSSPESLNAGSSEPVATLKLPQRKQRSFSECNDSSSVQRGILKRFSRYGPRPSISESSSSIDDCSSSYSCSVDAAGIGFSHSFGGIPEERVIADAELSESCKKTVRFNDHIMKKMFRLDSSILGQRKKNQKRRDCKLRAQQRRVSEGDSVDYEEVEHASNGQQTANKTAANAQYFKQPQNNNNRSYSKNNKNQSLHDSGLDLTNNNNHNNEEDTKRNEADAKNAMIFEMDDDDDEDM.

Disordered regions lie at residues 211–243 (KNATAEEREPHPLEHTYPKKPEANAGKPKVLPM), 372–395 (LSREDSGVELNSNSESPAEDEEAG), 587–719 (EQVH…SIDD), 781–821 (QRKK…QQTA), and 834–893 (PQNN…DEDM). The segment covering 214-232 (TAEEREPHPLEHTYPKKPE) has biased composition (basic and acidic residues). Phosphoserine is present on S377. The segment covering 594-603 (QQEEEEEEEQ) has biased composition (acidic residues). Residues 609 to 626 (HQHKKGNKKQRKRNKKQR) show a composition bias toward basic residues. Positions 640–651 (QQQQHQKQQQQQ) are enriched in low complexity. Composition is skewed to polar residues over residues 656 to 667 (ENSSPESLNAGS) and 684 to 694 (FSECNDSSSVQ). Over residues 709 to 719 (SISESSSSIDD) the composition is skewed to low complexity. Residues 781 to 797 (QRKKNQKRRDCKLRAQQ) are compositionally biased toward basic residues. S801 is modified (phosphoserine). Low complexity predominate over residues 836 to 848 (NNNNRSYSKNNKN). Positions 865–877 (NNEEDTKRNEADA) are enriched in basic and acidic residues. Residues 884–893 (EMDDDDDEDM) are compositionally biased toward acidic residues.

The protein belongs to the PIH1 family. Kintoun subfamily. Interacts with Pp1alpha-96A, Pp1-87B, Pp1-13C and flw.

It is found in the cytoplasm. Required for cytoplasmic pre-assembly of axonemal dyneins, thereby playing a central role in motility in cilia and flagella. Involved in pre-assembly of dynein arm complexes in the cytoplasm before intraflagellar transport loads them for the ciliary compartment. The chain is Protein kintoun from Drosophila grimshawi (Hawaiian fruit fly).